Consider the following 246-residue polypeptide: MIKFENVSKVYPNGTKGLTDVNLQIDQGEFVAIIGTSGAGKSTLIRCVNGLNDVTSGRLFVNDTDVSKLKGKDLRKFRRHVGMIFQSYNLVPRVTVLKNVMFARVPEMNLFKVIFGLFSKEDKLVALDSLNKVGILDKAYIRADQLSGGQQQRVSLARALTQESEILLADEPVSALDPVTAKEVMDDFKRINEELNKTILLNIHHVELALEYASRIIAVKKGKIVYDGPSQEVTKEILDEVYRKEG.

The region spanning 2-246 (IKFENVSKVY…ILDEVYRKEG (245 aa)) is the ABC transporter domain. 35 to 42 (GTSGAGKS) is an ATP binding site.

This sequence belongs to the ABC transporter superfamily. Phosphonates importer (TC 3.A.1.9.1) family. As to quaternary structure, the complex is composed of two ATP-binding proteins (PhnC), two transmembrane proteins (PhnE) and a solute-binding protein (PhnD).

The protein resides in the cell membrane. It carries out the reaction phosphonate(out) + ATP + H2O = phosphonate(in) + ADP + phosphate + H(+). Its function is as follows. Part of the ABC transporter complex PhnCDE involved in phosphonates import. Responsible for energy coupling to the transport system. In Lactococcus lactis subsp. cremoris (strain SK11), this protein is Phosphonates import ATP-binding protein PhnC.